A 384-amino-acid chain; its full sequence is Zinc finger CCCH domain-containing protein 12 (384 aa).

2 disordered regions span residues 1-32 and 46-81; these read MSHHRRDSGGDVVHVIPTNNPPPDNWFPNLGD and WAMNPDNTSGDNNGPPNKKTRGSPSSSSATTTSAAS. The span at 50-60 shows a compositional bias: polar residues; sequence PDNTSGDNNGP. Low complexity predominate over residues 70-81; sequence SSSSATTTSAAS. 2 C3H1-type zinc fingers span residues 91 to 118 and 172 to 200; these read FFKTKLCCKFRAGTCPYITNCNFAHTVE and SFKGRHCKKFYTEEGCPYGESCTFLHDEA. The tract at residues 211-231 is disordered; that stretch reads LGPGGYGSGGGGGSGGGSVGG. Residues 212-231 show a composition bias toward gly residues; it reads GPGGYGSGGGGGSGGGSVGG. The C3H1-type 3 zinc-finger motif lies at 260 to 288; it reads NWKTRICNKWEITGYCPFGAKCHFAHGAA. The tract at residues 299-335 is disordered; it reads EEEGKDGVSPNPDTKQTVQNPKGLSDTTTLLSPGVPH. Polar residues predominate over residues 309 to 329; the sequence is NPDTKQTVQNPKGLSDTTTLL.

This chain is Zinc finger CCCH domain-containing protein 12, found in Arabidopsis thaliana (Mouse-ear cress).